We begin with the raw amino-acid sequence, 140 residues long: UPF0134 protein MPN_094 (140 aa).

This sequence belongs to the UPF0134 family.

In Mycoplasma pneumoniae (strain ATCC 29342 / M129 / Subtype 1) (Mycoplasmoides pneumoniae), this protein is UPF0134 protein MPN_094.